A 144-amino-acid polypeptide reads, in one-letter code: Large ribosomal subunit protein uL13 (144 aa).

It belongs to the universal ribosomal protein uL13 family. Part of the 50S ribosomal subunit.

In terms of biological role, this protein is one of the early assembly proteins of the 50S ribosomal subunit, although it is not seen to bind rRNA by itself. It is important during the early stages of 50S assembly. The protein is Large ribosomal subunit protein uL13 of Clostridium kluyveri (strain NBRC 12016).